The chain runs to 485 residues: NADH-quinone oxidoreductase subunit N (485 aa).

A run of 14 helical transmembrane segments spans residues 8 to 28, 35 to 55, 71 to 91, 105 to 125, 127 to 147, 159 to 179, 203 to 223, 235 to 255, 271 to 291, 297 to 317, 326 to 346, 373 to 393, 408 to 430, and 455 to 475; these read LIAL…MLSI, FLNA…LWFV, GFAM…CTFA, FYLL…ANHL, SLFL…GYAF, YTIL…LVYA, LLAG…LVPF, PAPV…GVVM, VVLA…ALSQ, LLGY…IALQ, VGVY…VVSL, AAVM…LGFI, WWLV…RVAV, and IVVL…QPLI.

This sequence belongs to the complex I subunit 2 family. In terms of assembly, NDH-1 is composed of 13 different subunits. Subunits NuoA, H, J, K, L, M, N constitute the membrane sector of the complex.

The protein resides in the cell inner membrane. The enzyme catalyses a quinone + NADH + 5 H(+)(in) = a quinol + NAD(+) + 4 H(+)(out). Functionally, NDH-1 shuttles electrons from NADH, via FMN and iron-sulfur (Fe-S) centers, to quinones in the respiratory chain. The immediate electron acceptor for the enzyme in this species is believed to be ubiquinone. Couples the redox reaction to proton translocation (for every two electrons transferred, four hydrogen ions are translocated across the cytoplasmic membrane), and thus conserves the redox energy in a proton gradient. This chain is NADH-quinone oxidoreductase subunit N, found in Escherichia coli O7:K1 (strain IAI39 / ExPEC).